The chain runs to 492 residues: KAT8 regulatory NSL complex subunit 2 (492 aa).

Residue K78 forms a Glycyl lysine isopeptide (Lys-Gly) (interchain with G-Cter in SUMO2) linkage. The tract at residues 127–182 (LGSQTPESSRSEASRILDEDSWSDGEQEPITVDQTWRGDPDSEADSIDSDQEDPLK) is disordered. T131 carries the phosphothreonine modification. A compositionally biased stretch (basic and acidic residues) spans 135 to 144 (SRSEASRILD). Residues S147, S149, S168, S172, and S175 each carry the phosphoserine modification. Over residues 167 to 178 (DSEADSIDSDQE) the composition is skewed to acidic residues. Residues 308–364 (DVRCSNQSLPMTRHCLTHICQDTNQVLFKCCQGSEEVPCNKPVPVSLSEDPCCPLHF) are required for interaction with other NSL complex members. Positions 455–492 (AGDGCRSQGSRNSEKGSAPLSQSGLATANGKPEPTSIS) are disordered.

In terms of assembly, component of the NSL complex at least composed of KAT8/MOF, KANSL1, KANSL2, KANSL3, MCRS1, PHF20, OGT1/OGT, WDR5 and HCFC1.

It localises to the nucleus. The protein resides in the mitochondrion. Functionally, non-catalytic component of the NSL histone acetyltransferase complex, a multiprotein complex that mediates histone H4 acetylation at 'Lys-5'- and 'Lys-8' (H4K5ac and H4K8ac) at transcription start sites and promotes transcription initiation. Required for NSL complex stability and for transcription of intraciliary transport genes in both ciliated and non-ciliated cells by regulating histone H4 acetylation at 'Lys-5'- and 'Lys-12' (H4K5ac and H4K12ac). This is necessary for cilium assembly in ciliated cells and for organization of the microtubule cytoskeleton in non-ciliated cells. Required within the NSL complex to maintain nuclear architecture stability by promoting KAT8-mediated acetylation of lamin LMNA. The sequence is that of KAT8 regulatory NSL complex subunit 2 (KANSL2) from Pongo abelii (Sumatran orangutan).